The sequence spans 596 residues: Chloride intracellular channel protein 6 (596 aa).

Residues 1–360 (MAEATEPKEV…ALEEGDPGQE (360 aa)) form a disordered region. Basic and acidic residues predominate over residues 34 to 48 (LEGREASEEAAEAPR). Residue Ser40 is modified to Phosphoserine. Residues 65–74 (GCGQDEGTGG) are compositionally biased toward gly residues. The span at 83–98 (GPEAETPGASGAPGEA) shows a compositional bias: low complexity. The segment covering 118–130 (SAQQVQGMSSGLD) has biased composition (polar residues). Acidic residues predominate over residues 148 to 160 (DPTASEAGEEAES). Composition is skewed to low complexity over residues 197–213 (GSES…PQPQ) and 225–244 (GGNE…AGEG). The segment covering 246–290 (TLGKDGSEEAASEDARVDAHENGDQGKLQEETGEEEARPEPELKG) has biased composition (basic and acidic residues). Ser304 carries the post-translational modification Phosphoserine. The span at 338-348 (ELGRVNGRREN) shows a compositional bias: basic and acidic residues. Residues 379–382 (CPFS) carry the G-site motif. A helical transmembrane segment spans residues 381–401 (FSQRLFMILWLKGVIFNVTTV). Residues 425–596 (DGEVKTDVNK…AYSDAAKRMK (172 aa)) form the GST C-terminal domain.

It belongs to the chloride channel CLIC family. Monomer (soluble state). Interacts with dopamine receptors DRD2, DRD3 and DRD4. Post-translationally, phosphorylated.

The protein localises to the cytoplasm. It localises to the cell membrane. It carries out the reaction chloride(in) = chloride(out). Its activity is regulated as follows. Channel activity is redox- and pH-regulated. Inhibited by IAA-94. Functionally, in the soluble state, catalyzes glutaredoxin-like thiol disulfide exchange reactions with reduced glutathione as electron donor. Can insert into membranes and form voltage-dependent chloride-selective channels. The channel opens upon membrane depolarization at positive voltages and closes at negative membrane voltages. May play a critical role in water-secreting cells, possibly through the regulation of chloride ion transport. This Mus musculus (Mouse) protein is Chloride intracellular channel protein 6 (Clic6).